The following is a 200-amino-acid chain: MRTSGLLEQLMESLRCLPGVGPKSAQRMAFHLLQRNRQGGMQLADALSQAMSEIGHCSECRTFTEEDTCAICLNPKRQASGEMCIVESPADIVAVEATGQFSGRYFVLMGHLSPLDGIGPSDIGLDLLDHRLNRGDIKEVILATNPTVEGEATAHYIAELCQEHQVPASRIAHGVPMGGELELVDGTTLSHSILGRQKLY.

A C4-type zinc finger spans residues Cys-57–Cys-72. A Toprim domain is found at Gly-81–Pro-176.

This sequence belongs to the RecR family.

May play a role in DNA repair. It seems to be involved in an RecBC-independent recombinational process of DNA repair. It may act with RecF and RecO. The protein is Recombination protein RecR of Aliivibrio fischeri (strain ATCC 700601 / ES114) (Vibrio fischeri).